We begin with the raw amino-acid sequence, 88 residues long: Large ribosomal subunit protein eL34 (88 aa).

A disordered region spans residues 41–72 (RPLNGIPRGRPNELRKLPKTKKRPERPMPNLC).

It belongs to the eukaryotic ribosomal protein eL34 family.

This Thermococcus sibiricus (strain DSM 12597 / MM 739) protein is Large ribosomal subunit protein eL34.